The following is a 273-amino-acid chain: NADPH-dependent 7-cyano-7-deazaguanine reductase (273 aa).

81 to 83 (VES) contacts substrate. 83 to 84 (SK) provides a ligand contact to NADPH. C179 functions as the Thioimide intermediate in the catalytic mechanism. The Proton donor role is filled by D186. 218–219 (AE) contributes to the substrate binding site. 247 to 248 (RG) contacts NADPH.

The protein belongs to the GTP cyclohydrolase I family. QueF type 2 subfamily. Homodimer.

It is found in the cytoplasm. It catalyses the reaction 7-aminomethyl-7-carbaguanine + 2 NADP(+) = 7-cyano-7-deazaguanine + 2 NADPH + 3 H(+). It participates in tRNA modification; tRNA-queuosine biosynthesis. Its function is as follows. Catalyzes the NADPH-dependent reduction of 7-cyano-7-deazaguanine (preQ0) to 7-aminomethyl-7-deazaguanine (preQ1). This chain is NADPH-dependent 7-cyano-7-deazaguanine reductase, found in Rickettsia massiliae (strain Mtu5).